We begin with the raw amino-acid sequence, 1160 residues long: DNA polymerase III subunit alpha (1160 aa).

The protein resides in the cytoplasm. It catalyses the reaction DNA(n) + a 2'-deoxyribonucleoside 5'-triphosphate = DNA(n+1) + diphosphate. DNA polymerase III is a complex, multichain enzyme responsible for most of the replicative synthesis in bacteria. This DNA polymerase also exhibits 3' to 5' exonuclease activity. The alpha chain is the DNA polymerase. The polypeptide is DNA polymerase III subunit alpha (dnaE) (Escherichia coli O6:H1 (strain CFT073 / ATCC 700928 / UPEC)).